The sequence spans 355 residues: Uroporphyrinogen decarboxylase (355 aa).

Substrate contacts are provided by residues 27–31 (RQAGR), D78, Y155, S210, and H328.

Belongs to the uroporphyrinogen decarboxylase family. In terms of assembly, homodimer.

It localises to the cytoplasm. The enzyme catalyses uroporphyrinogen III + 4 H(+) = coproporphyrinogen III + 4 CO2. It participates in porphyrin-containing compound metabolism; protoporphyrin-IX biosynthesis; coproporphyrinogen-III from 5-aminolevulinate: step 4/4. Its function is as follows. Catalyzes the decarboxylation of four acetate groups of uroporphyrinogen-III to yield coproporphyrinogen-III. This chain is Uroporphyrinogen decarboxylase, found in Pseudomonas aeruginosa (strain LESB58).